We begin with the raw amino-acid sequence, 367 residues long: Innexin inx2 (367 aa).

Residues 1–22 are Cytoplasmic-facing; it reads MFDVFGSVKGLLKIDQVCIDNN. A helical transmembrane segment spans residues 23–43; that stretch reads VFRMHYKATVIILIAFSLLVT. Topologically, residues 44–109 are extracellular; sequence SRQYIGDPID…EDEVKYHKYY (66 aa). A helical membrane pass occupies residues 110–130; it reads QWVCFVLFFQAILFYVPRYLW. The interval 130 to 179 is interaction with shg; sequence WKSWEGGRLKMLVMDLNSPIVNDECKNDRKKILVDYFIGNLNRHNFYAFR. The Cytoplasmic portion of the chain corresponds to 131–179; sequence KSWEGGRLKMLVMDLNSPIVNDECKNDRKKILVDYFIGNLNRHNFYAFR. The helical transmembrane segment at 180–200 threads the bilayer; it reads FFVCEALNFVNVIGQIYFVDF. Topologically, residues 201 to 266 are extracellular; it reads FLDGEFSTYG…VLPLNIVNEK (66 aa). The helical transmembrane segment at 267–287 threads the bilayer; it reads IYVFLWFWFIILSIMSGISLI. Topologically, residues 288–367 are cytoplasmic; that stretch reads YRIAVVAGPK…HSAHKRPFDA (80 aa).

This sequence belongs to the pannexin family. As to quaternary structure, monomer and heterooligomer with ogre or Inx3 (via cytoplasmic C-terminal region). Interacts (via cytoplasmic loop) with shg (via cytoplasmic region). Interacts with arm. In ovary, expressed in inner germarial sheath cells, prefollicular cells, follicle cells, nurse cells and oocytes. Expressed in embryonic epithelial cells. Expressed in foregut and hindgut from stage 11-17, segmentally repeated tracheal placodes at stage 14, salivary gland at stage 16 and proventriculus at stage 16-17 (at protein level). During germband extension stage (stage 7), expressed in epidermal epithelial cells. Expressed in cephalic furrow. Repeating epidermal pattern emerges at stage 11, refines to one or two cells at each side of the segment borders by stage 13. Expressed in the imaginal wing disk. In pupae, expressed in the CNS and in primary, secondary and tertiary pigment cells of the retina. Expressed in optic lamina of the adult CNS.

It is found in the cell membrane. The protein localises to the cell junction. The protein resides in the gap junction. Its subcellular location is the cytoplasm. It localises to the apical cell membrane. It is found in the apicolateral cell membrane. The protein localises to the basolateral cell membrane. The protein resides in the lateral cell membrane. Structural components of the gap junctions. Involved in gap junctional communication between germline and somatic cells which is essential for normal oogenesis. In embryonic epidermis, required for epithelial morphogenesis. Required for keyhole formation during early stages of proventriculus development in response to wg signaling. In follicle cells, promotes the formation of egg chambers in part through regulation of shg and baz at the boundary between germ cells and follicle cells. In inner germarial sheath cells, required for survival of early germ cells and for cyst formation. The sequence is that of Innexin inx2 (Inx2) from Drosophila melanogaster (Fruit fly).